A 197-amino-acid chain; its full sequence is Peptide deformylase (197 aa).

Residues Cys-106 and His-148 each contribute to the Fe cation site. Residue Glu-149 is part of the active site. His-152 contributes to the Fe cation binding site.

The protein belongs to the polypeptide deformylase family. It depends on Fe(2+) as a cofactor.

It catalyses the reaction N-terminal N-formyl-L-methionyl-[peptide] + H2O = N-terminal L-methionyl-[peptide] + formate. Removes the formyl group from the N-terminal Met of newly synthesized proteins. Requires at least a dipeptide for an efficient rate of reaction. N-terminal L-methionine is a prerequisite for activity but the enzyme has broad specificity at other positions. The chain is Peptide deformylase from Mycobacterium tuberculosis (strain ATCC 25177 / H37Ra).